The chain runs to 312 residues: Ribosomal protein L11 methyltransferase (312 aa).

4 residues coordinate S-adenosyl-L-methionine: threonine 163, glycine 184, aspartate 206, and asparagine 248.

Belongs to the methyltransferase superfamily. PrmA family.

The protein localises to the cytoplasm. The enzyme catalyses L-lysyl-[protein] + 3 S-adenosyl-L-methionine = N(6),N(6),N(6)-trimethyl-L-lysyl-[protein] + 3 S-adenosyl-L-homocysteine + 3 H(+). Functionally, methylates ribosomal protein L11. This is Ribosomal protein L11 methyltransferase from Clostridium botulinum (strain Okra / Type B1).